The sequence spans 514 residues: MISFFTKTTDMMTSKKRWTALVVLAVSLFVVTMDMTILIMALPELVRELEPSGTQQLWIVDIYSLVLAGFIIPLSAFADKWGRKKALLTGFALFGLVSLAIFFAESAEFVIAIRFLLGIAGALIMPTTLSMIRVIFENPKERATALAVWSIASSIGAVFGPIIGGALLEQFSWHSAFLINVPFAIIAVVAGLFLLPESKLSKEKSHSWDIPSTILSIAGMIGLVWSIKEFSKEGLADIIPWVVIVLAITMIVIFVKRNLSSSDPMLDVRLFKKRSFSAGTIAAFMTMFAMASVLLLASQWLQVVEELSPFKAGLYLLPMAIGDMVFAPIAPGLAARFGPKIVLPSGIGIAAIGMFIMYFFGHPLSYSTMALALILVGAGMASLAVASALIMLETPTSKAGNAAAVEESMYDLGNVFGVAVLGSLSSMLYRVFLDISSFSSKGIVGDLAHVAEESVVGAVEVAKATGIKQLANEAVTSFNDAFVATALVGGIIMIIISIVVYLLIPKSLDITKQK.

Residues M1–V23 are Cytoplasmic-facing. A helical transmembrane segment spans residues L24 to A41. Over L42–L57 the chain is Extracellular. Residues W58–S75 traverse the membrane as a helical segment. Over A76–A86 the chain is Cytoplasmic. The chain crosses the membrane as a helical span at residues L87–A104. Over E105–A112 the chain is Extracellular. Residues I113–S130 traverse the membrane as a helical segment. At M131–L146 the chain is on the cytoplasmic side. Residues A147–G164 traverse the membrane as a helical segment. The Extracellular segment spans residues G165–S172. Residues W173 to A190 form a helical membrane-spanning segment. Over G191 to S207 the chain is Cytoplasmic. A helical membrane pass occupies residues W208–W225. At S226–D237 the chain is on the extracellular side. Residues I238–V255 traverse the membrane as a helical segment. At K256–A278 the chain is on the cytoplasmic side. Residues G279–L295 form a helical membrane-spanning segment. Over L296–Y315 the chain is Extracellular. A helical transmembrane segment spans residues L316–L333. Residues A334–I341 are Cytoplasmic-facing. The helical transmembrane segment at V342–F360 threads the bilayer. Residues G361 to M369 are Extracellular-facing. The helical transmembrane segment at A370–S387 threads the bilayer. Over A388 to S408 the chain is Cytoplasmic. A helical membrane pass occupies residues M409–S426. Residues M427–A481 lie on the Extracellular side of the membrane. The chain crosses the membrane as a helical span at residues F482–V499. The Cytoplasmic segment spans residues V500–K514.

This sequence belongs to the major facilitator superfamily.

The protein localises to the cell membrane. Functionally, confers export-mediated resistance against antiseptic and disinfectant compounds such as intercalating dyes, quaternary ammonium salts and diamidines. In Staphylococcus aureus (strain Mu50 / ATCC 700699), this protein is Antiseptic resistance protein (qacA).